The following is a 505-amino-acid chain: MVNSSPVPGALAIFGTASDVGKSIVATALCRMFSNAGIDVAPYKAQNMSNNSGVTPDGCEIGRAQIAQAEAARVVPTADMNPVLLKPNSDTGAQIVLQGKVCSTETAKGYFLDTSLWAEAARKSLDQLMQRHELVVIEGAGSCAEMNLYDRDFVNFRTARISGAPVILVADIDRGGVFAQVVGTLAVLPPEDRALVKGVIINRFRGDIDLFRDGVKLIETLAGIPVLGVIPYFRGFRIDAEDAVPLSSKVDPSGAPEKGRIAVAAIYFPHISNFTDLSPLELDPKVELHYLHFPRSLRGYQALILPGTKNVRGDLDWLTSLGWAEKIREFRRDGGLIMGICGGYQMLGATIADPSGVEGEPGESAGLGMLPVHTVLEEEKCLSNAIGNIQGESIAVSGYEIHMGRTTSNGDCSSFLRVTARNNRPADDVDGVITPDGKVIGTYFHGIIDEPEVRCWFLRQIDPAYTPDAEERGRQESYDLLADHFSGYLDIPKLYEIIQRPCPNP.

A GATase cobBQ-type domain is found at R260–V453. Catalysis depends on C341, which acts as the Nucleophile. Residue H445 is part of the active site.

It belongs to the CobB/CobQ family. CobQ subfamily.

It functions in the pathway cofactor biosynthesis; adenosylcobalamin biosynthesis. In terms of biological role, catalyzes amidations at positions B, D, E, and G on adenosylcobyrinic A,C-diamide. NH(2) groups are provided by glutamine, and one molecule of ATP is hydrogenolyzed for each amidation. This is Cobyric acid synthase from Chlorobium phaeobacteroides (strain DSM 266 / SMG 266 / 2430).